The chain runs to 284 residues: Tropomyosin (284 aa).

Residues 1–284 adopt a coiled-coil conformation; sequence MDAIKKKMLA…DQTFAELAGY (284 aa). Residues 202–213 show a composition bias toward polar residues; that stretch reads NNTKSLEISEQE. The tract at residues 202–223 is disordered; it reads NNTKSLEISEQEASQREDSYEE. Positions 214–223 are enriched in basic and acidic residues; it reads ASQREDSYEE.

Belongs to the tropomyosin family. As to quaternary structure, homodimer.

Tropomyosin, in association with the troponin complex, plays a central role in the calcium dependent regulation of muscle contraction. In Haliotis rufescens (California red abalone), this protein is Tropomyosin.